A 94-amino-acid chain; its full sequence is Aspartyl/glutamyl-tRNA(Asn/Gln) amidotransferase subunit C (94 aa).

Belongs to the GatC family. As to quaternary structure, heterotrimer of A, B and C subunits.

It catalyses the reaction L-glutamyl-tRNA(Gln) + L-glutamine + ATP + H2O = L-glutaminyl-tRNA(Gln) + L-glutamate + ADP + phosphate + H(+). It carries out the reaction L-aspartyl-tRNA(Asn) + L-glutamine + ATP + H2O = L-asparaginyl-tRNA(Asn) + L-glutamate + ADP + phosphate + 2 H(+). In terms of biological role, allows the formation of correctly charged Asn-tRNA(Asn) or Gln-tRNA(Gln) through the transamidation of misacylated Asp-tRNA(Asn) or Glu-tRNA(Gln) in organisms which lack either or both of asparaginyl-tRNA or glutaminyl-tRNA synthetases. The reaction takes place in the presence of glutamine and ATP through an activated phospho-Asp-tRNA(Asn) or phospho-Glu-tRNA(Gln). This chain is Aspartyl/glutamyl-tRNA(Asn/Gln) amidotransferase subunit C, found in Carboxydothermus hydrogenoformans (strain ATCC BAA-161 / DSM 6008 / Z-2901).